The primary structure comprises 530 residues: Pentatricopeptide repeat-containing protein At5g56310 (530 aa).

PPR repeat units follow at residues 77–114 (NTYL…CAKP), 115–149 (DTFT…GFDS), 150–180 (SVHV…MLVK), 181–211 (DVNV…MPCW), 214–248 (NEVS…NVEP), 249–283 (DEVT…GMNR), 284–314 (AVSL…VNER), 315–349 (NVVT…GVRP), 350–380 (NDVT…MRSK), and 386–420 (NIEH…ANAA). Positions 421-496 (IWGSLLAASN…MAGESSIEVE (76 aa)) are type E motif. The type E(+) motif stretch occupies residues 497-527 (NRVYKFISGDLTHPQVERIHEILQEMDLQIQ).

This sequence belongs to the PPR family. PCMP-E subfamily.

The polypeptide is Pentatricopeptide repeat-containing protein At5g56310 (PCMP-E13) (Arabidopsis thaliana (Mouse-ear cress)).